Consider the following 198-residue polypeptide: Transcriptional regulator GfcR (198 aa).

It belongs to the purine/pyrimidine phosphoribosyltransferase family. GfcR subfamily.

The protein is Transcriptional regulator GfcR of Methanospirillum hungatei JF-1 (strain ATCC 27890 / DSM 864 / NBRC 100397 / JF-1).